The sequence spans 719 residues: Phenylalanine--tRNA ligase beta subunit, chloroplastic (719 aa).

The region spanning Asp-318 to Ser-403 is the B5 domain. The Mg(2+) site is built by Asp-381, Asp-387, Glu-390, and Glu-391. The 94-residue stretch at Ser-625 to Arg-718 folds into the FDX-ACB domain.

Belongs to the phenylalanyl-tRNA synthetase beta subunit family. Type 1 subfamily. As to quaternary structure, tetramer of two alpha and two beta subunits. Mg(2+) serves as cofactor.

The protein localises to the plastid. It localises to the chloroplast. The catalysed reaction is tRNA(Phe) + L-phenylalanine + ATP = L-phenylalanyl-tRNA(Phe) + AMP + diphosphate + H(+). The protein is Phenylalanine--tRNA ligase beta subunit, chloroplastic of Pyropia yezoensis (Susabi-nori).